The following is a 499-amino-acid chain: ADP,ATP carrier protein 5 (499 aa).

11 helical membrane-spanning segments follow: residues 25 to 45 (LGKFIPMSTLMFCILFNQNVL), 61 to 81 (IAGFAKVYCVTPAAALFVIIY), 93 to 113 (IFYYLSAFFISFFVLFTFVIY), 148 to 168 (YIVYYSLAELWPNIFYVLLFW), 183 to 203 (FYTLFSLFGNSSLILVGFLMM), 223 to 243 (ITLVQVSTTIVAIVAIICCLL), 286 to 306 (LWLLLICSAAFGFAINLVEAV), 327 to 347 (LYILWTGVAIMVMTIIGNNIM), 356 to 376 (AVISPVIIMVTGILFFVLIVF), 380 to 400 (ILSLFDGAILMSPLALAVSIG), and 468 to 488 (LISPILMVVFTFVCLAWIYAV).

It belongs to the ADP/ATP translocase tlc family.

The protein localises to the cell membrane. Provides the rickettsial cell with host ATP in exchange for rickettsial ADP. This is an obligate exchange system. This energy acquiring activity is an important component of rickettsial parasitism. The polypeptide is ADP,ATP carrier protein 5 (tlcE) (Rickettsia conorii (strain ATCC VR-613 / Malish 7)).